We begin with the raw amino-acid sequence, 214 residues long: Octanoyltransferase (214 aa).

In terms of domain architecture, BPL/LPL catalytic spans 28 to 210; sequence GTAEDALYLL…EFGKVFTDTA (183 aa). Substrate is bound by residues 73 to 80, 140 to 142, and 153 to 155; these read RGGNITCH, SIG, and GLS. Cys-171 acts as the Acyl-thioester intermediate in catalysis.

Belongs to the LipB family.

It localises to the cytoplasm. It carries out the reaction octanoyl-[ACP] + L-lysyl-[protein] = N(6)-octanoyl-L-lysyl-[protein] + holo-[ACP] + H(+). It functions in the pathway protein modification; protein lipoylation via endogenous pathway; protein N(6)-(lipoyl)lysine from octanoyl-[acyl-carrier-protein]: step 1/2. Its function is as follows. Catalyzes the transfer of endogenously produced octanoic acid from octanoyl-acyl-carrier-protein onto the lipoyl domains of lipoate-dependent enzymes. Lipoyl-ACP can also act as a substrate although octanoyl-ACP is likely to be the physiological substrate. This is Octanoyltransferase from Maridesulfovibrio salexigens (strain ATCC 14822 / DSM 2638 / NCIMB 8403 / VKM B-1763) (Desulfovibrio salexigens).